The chain runs to 235 residues: Futalosine hydrolase (235 aa).

This sequence belongs to the PNP/UDP phosphorylase family. Futalosine hydrolase subfamily.

It catalyses the reaction futalosine + H2O = dehypoxanthine futalosine + hypoxanthine. It participates in quinol/quinone metabolism; menaquinone biosynthesis. In terms of biological role, catalyzes the hydrolysis of futalosine (FL) to dehypoxanthine futalosine (DHFL) and hypoxanthine, a step in the biosynthesis of menaquinone (MK, vitamin K2). Does not accept aminodeoxyfutalosine (AFL) as a substrate. The chain is Futalosine hydrolase from Streptomyces coelicolor (strain ATCC BAA-471 / A3(2) / M145).